The sequence spans 622 residues: Threonine--tRNA ligase (622 aa).

The editing domain stretch occupies residues 1–136 (MKTLLIHSDY…PLSELSRKIT (136 aa)). Positions 199–498 (PHVKYIKEKE…TLENKPPALP (300 aa)) are catalytic. Zn(2+) is bound by residues cysteine 291, histidine 343, and histidine 467.

The protein belongs to the class-II aminoacyl-tRNA synthetase family. In terms of assembly, homodimer. It depends on Zn(2+) as a cofactor.

The protein resides in the cytoplasm. It carries out the reaction tRNA(Thr) + L-threonine + ATP = L-threonyl-tRNA(Thr) + AMP + diphosphate + H(+). Functionally, catalyzes the attachment of threonine to tRNA(Thr) in a two-step reaction: L-threonine is first activated by ATP to form Thr-AMP and then transferred to the acceptor end of tRNA(Thr). Also edits incorrectly charged L-seryl-tRNA(Thr). The protein is Threonine--tRNA ligase of Methanococcus maripaludis (strain DSM 14266 / JCM 13030 / NBRC 101832 / S2 / LL).